The following is a 271-amino-acid chain: ABC transporter I family member 10 (271 aa).

The region spanning 40 to 267 (VECRNLCFSV…IKAKQSSYID (228 aa)) is the ABC transporter domain. 77–84 (GPNGCGKS) contributes to the ATP binding site.

It belongs to the ABC transporter superfamily. ABCI family.

The sequence is that of ABC transporter I family member 10 (ABCI10) from Arabidopsis thaliana (Mouse-ear cress).